We begin with the raw amino-acid sequence, 374 residues long: N5-carboxyaminoimidazole ribonucleotide synthase (374 aa).

Residues R108, K148, G153 to Q159, E183 to L186, E191, H214, and N266 to E267 each bind ATP. The 185-residue stretch at K112–T296 folds into the ATP-grasp domain.

It belongs to the PurK/PurT family. As to quaternary structure, homodimer.

The catalysed reaction is 5-amino-1-(5-phospho-beta-D-ribosyl)imidazole + hydrogencarbonate + ATP = 5-carboxyamino-1-(5-phospho-D-ribosyl)imidazole + ADP + phosphate + 2 H(+). Its pathway is purine metabolism; IMP biosynthesis via de novo pathway; 5-amino-1-(5-phospho-D-ribosyl)imidazole-4-carboxylate from 5-amino-1-(5-phospho-D-ribosyl)imidazole (N5-CAIR route): step 1/2. Functionally, catalyzes the ATP-dependent conversion of 5-aminoimidazole ribonucleotide (AIR) and HCO(3)(-) to N5-carboxyaminoimidazole ribonucleotide (N5-CAIR). The polypeptide is N5-carboxyaminoimidazole ribonucleotide synthase (Staphylococcus aureus (strain MRSA252)).